Consider the following 81-residue polypeptide: Centromere protein X (81 aa).

Methionine 1 is subject to N-acetylmethionine.

The protein belongs to the CENP-X/MHF2 family. As to quaternary structure, heterodimer with CENPX, sometimes called MHF; this interaction stabilizes both partners. MHF heterodimers can assemble to form tetrameric structures. MHF also coassemble with CENPT-CENPW heterodimers at centromeres to form the tetrameric CENP-T-W-S-X complex. Forms a discrete complex with FANCM and CENPX, called FANCM-MHF; this interaction, probably mediated by direct binding between CENPS and FANCM, leads to synergistic activation of double-stranded DNA binding and strongly stimulates FANCM-mediated DNA remodeling. Recruited by FANCM to the Fanconi anemia (FA) core complex, which consists of CENPS, CENPX, FANCA, FANCB, FANCC, FANCE, FANCF, FANCG, FANCL, FANCM, FAAP24 and FAAP100. The FA core complex associates with Bloom syndrome (BLM) complex, which consists of at least BLM, DNA topoisomerase 3-alpha (TOP3A), RMI1/BLAP75, RPA1/RPA70 and RPA2/RPA32. The super complex between FA and BLM is called BRAFT.

It is found in the nucleus. The protein resides in the chromosome. The protein localises to the centromere. Its subcellular location is the kinetochore. Functionally, DNA-binding component of the Fanconi anemia (FA) core complex. Required for the normal activation of the FA pathway, leading to monoubiquitination of the FANCI-FANCD2 complex in response to DNA damage, cellular resistance to DNA cross-linking drugs, and prevention of chromosomal breakage. In complex with CENPS (MHF heterodimer), crucial cofactor for FANCM in both binding and ATP-dependent remodeling of DNA. Stabilizes FANCM. In complex with CENPS and FANCM (but not other FANC proteins), rapidly recruited to blocked forks and promotes gene conversion at blocked replication forks. In complex with CENPS, CENPT and CENPW (CENP-T-W-S-X heterotetramer), involved in the formation of a functional kinetochore outer plate, which is essential for kinetochore-microtubule attachment and faithful mitotic progression. As a component of MHF and CENP-T-W-S-X complexes, binds DNA and bends it to form a nucleosome-like structure. DNA-binding function is fulfilled in the presence of CENPS, with the following preference for DNA substates: Holliday junction &gt; double-stranded &gt; splay arm &gt; single-stranded. Does not bind DNA on its own. This chain is Centromere protein X (CENPX), found in Pongo abelii (Sumatran orangutan).